The primary structure comprises 614 residues: UvrABC system protein C (614 aa).

Residues 16–94 form the GIY-YIG domain; it reads SRPGVYRMFG…VKSLKPRFNV (79 aa). The 36-residue stretch at 204 to 239 folds into the UVR domain; it reads GELQKRLASEMEAASEAMEFETAARLRDRIRAIAHV.

Belongs to the UvrC family. As to quaternary structure, interacts with UvrB in an incision complex.

The protein resides in the cytoplasm. Functionally, the UvrABC repair system catalyzes the recognition and processing of DNA lesions. UvrC both incises the 5' and 3' sides of the lesion. The N-terminal half is responsible for the 3' incision and the C-terminal half is responsible for the 5' incision. The polypeptide is UvrABC system protein C (Hyphomonas neptunium (strain ATCC 15444)).